The sequence spans 475 residues: ATP synthase subunit beta (475 aa).

152–159 provides a ligand contact to ATP; that stretch reads GGAGVGKT.

It belongs to the ATPase alpha/beta chains family. As to quaternary structure, F-type ATPases have 2 components, CF(1) - the catalytic core - and CF(0) - the membrane proton channel. CF(1) has five subunits: alpha(3), beta(3), gamma(1), delta(1), epsilon(1). CF(0) has four main subunits: a(1), b(1), b'(1) and c(9-12).

It localises to the cell inner membrane. The enzyme catalyses ATP + H2O + 4 H(+)(in) = ADP + phosphate + 5 H(+)(out). Produces ATP from ADP in the presence of a proton gradient across the membrane. The catalytic sites are hosted primarily by the beta subunits. This is ATP synthase subunit beta from Cereibacter sphaeroides (strain ATCC 17025 / ATH 2.4.3) (Rhodobacter sphaeroides).